Here is a 198-residue protein sequence, read N- to C-terminus: Outer-membrane lipoprotein carrier protein (198 aa).

The N-terminal stretch at 1–16 (MKKWLVVFFLSASALA) is a signal peptide.

The protein belongs to the LolA family. Monomer.

The protein localises to the periplasm. In terms of biological role, participates in the translocation of lipoproteins from the inner membrane to the outer membrane. Only forms a complex with a lipoprotein if the residue after the N-terminal Cys is not an aspartate (The Asp acts as a targeting signal to indicate that the lipoprotein should stay in the inner membrane). This is Outer-membrane lipoprotein carrier protein from Vibrio vulnificus (strain YJ016).